The chain runs to 300 residues: Putative glycosyltransferase ORF300 (300 aa).

The protein belongs to the glycosyltransferase group 1 family. Glycosyltransferase 4 subfamily.

This is Putative glycosyltransferase ORF300 from Acidianus hospitalis (AFV-1).